The chain runs to 249 residues: Metallo-beta-lactamase type 2 (249 aa).

The N-terminal stretch at 1–22 (MLKKIKISLILALGLTSLQAFG) is a signal peptide. Residues His98, His100, Asp102, His161, and Cys180 each contribute to the Zn(2+) site. Position 183 (Lys183) interacts with substrate. Zn(2+) is bound at residue His222.

This sequence belongs to the metallo-beta-lactamase superfamily. Class-B beta-lactamase family. Monomer. Zn(2+) serves as cofactor.

The protein resides in the periplasm. It catalyses the reaction a beta-lactam + H2O = a substituted beta-amino acid. Inhibited by chelating agents such as EDTA, 1-10 phenanthroline and pyridine-2,6-dicarboxylic acid. In terms of biological role, confers resistance to the different beta-lactams antibiotics (penicillin, cephalosporin and carbapenem) via the hydrolysis of the beta-lactam ring. The sequence is that of Metallo-beta-lactamase type 2 (blaB1) from Elizabethkingia meningoseptica (Chryseobacterium meningosepticum).